Consider the following 305-residue polypeptide: Methionyl-tRNA formyltransferase (305 aa).

A (6S)-5,6,7,8-tetrahydrofolate-binding site is contributed by 110–113; that stretch reads SLLP.

This sequence belongs to the Fmt family.

The enzyme catalyses L-methionyl-tRNA(fMet) + (6R)-10-formyltetrahydrofolate = N-formyl-L-methionyl-tRNA(fMet) + (6S)-5,6,7,8-tetrahydrofolate + H(+). In terms of biological role, attaches a formyl group to the free amino group of methionyl-tRNA(fMet). The formyl group appears to play a dual role in the initiator identity of N-formylmethionyl-tRNA by promoting its recognition by IF2 and preventing the misappropriation of this tRNA by the elongation apparatus. In Gluconacetobacter diazotrophicus (strain ATCC 49037 / DSM 5601 / CCUG 37298 / CIP 103539 / LMG 7603 / PAl5), this protein is Methionyl-tRNA formyltransferase.